A 911-amino-acid polypeptide reads, in one-letter code: Transcription factor E2F7 (911 aa).

Ser94 is subject to Phosphoserine. The DNA-binding element occupies 141 to 210 (RKQKSLGLLC…VAKNQYSWHG (70 aa)). 3 disordered regions span residues 239 to 281 (QKEL…ANSR), 409 to 433 (SFNS…PYRQ), and 565 to 706 (SPGS…SPLQ). Residues 243 to 257 (NPIDHKSGERRRDGC) show a composition bias toward basic and acidic residues. A DNA-binding region spans residues 281-366 (RKDKSLKIMS…GRKPAFKWIG (86 aa)). A Phosphoserine modification is found at Ser409. Basic and acidic residues predominate over residues 415 to 424 (ASERTQRKVN). The span at 566–579 (PGSGSGSGSVGGGS) shows a compositional bias: gly residues. Basic and acidic residues predominate over residues 599–621 (ERRLQEEEEEPATKRQCRDHEDG). Polar residues predominate over residues 669–687 (KATTNGFVSSEWGNPCSNT). A compositionally biased stretch (basic and acidic residues) spans 688 to 698 (EIEKPSEENES). At Ser840 the chain carries Phosphoserine. The segment at 873–911 (FFKTPGSLGDPVLRRKERNQSRSSSSAQRRLEISSGGTD) is disordered.

This sequence belongs to the E2F/DP family. In terms of assembly, homodimer and heterodimer: mainly forms homodimers and, to a lesser extent, heterodimers with E2F8. Dimerization is important for DNA-binding. Interacts with HIF1A. Interacts with MN1.

It is found in the nucleus. Atypical E2F transcription factor that participates in various processes such as angiogenesis, polyploidization of specialized cells and DNA damage response. Mainly acts as a transcription repressor that binds DNA independently of DP proteins and specifically recognizes the E2 recognition site 5'-TTTC[CG]CGC-3'. Directly represses transcription of classical E2F transcription factors such as E2F1. Acts as a regulator of S-phase by recognizing and binding the E2-related site 5'-TTCCCGCC-3' and mediating repression of G1/S-regulated genes. Plays a key role in polyploidization of cells in placenta and liver by regulating the endocycle, probably by repressing genes promoting cytokinesis and antagonizing action of classical E2F proteins (E2F1, E2F2 and/or E2F3). Required for placental development by promoting polyploidization of trophoblast giant cells. Also involved in DNA damage response: up-regulated by p53/TP53 following genotoxic stress and acts as a downstream effector of p53/TP53-dependent repression by mediating repression of indirect p53/TP53 target genes involved in DNA replication. Acts as a promoter of sprouting angiogenesis, possibly by acting as a transcription activator: associates with HIF1A, recognizes and binds the VEGFA promoter, which is different from canonical E2 recognition site, and activates expression of the VEGFA gene. Acts as a negative regulator of keratinocyte differentiation. The polypeptide is Transcription factor E2F7 (E2F7) (Bos taurus (Bovine)).